The following is a 499-amino-acid chain: Chitinase B (499 aa).

The N-terminal stretch at 1 to 41 (MSTRKAVIGYYFIPTNQINNYTETDTSVVPFPVSNITPAKA) is a signal peptide. Residues 42–425 (KQLTHINFSF…AALDRYFNAA (384 aa)) enclose the GH18 domain. Chitin contacts are provided by residues 68–69 (DA) and 95–98 (GGWY). Residue glutamate 144 is the Proton donor of the active site. Residues tyrosine 145, 212-215 (MTYD), and tryptophan 403 contribute to the chitin site. Residues 438 to 498 (LRYTGVGPGN…DSAWLKVGRL (61 aa)) enclose the Chitin-binding type-3 domain.

This sequence belongs to the glycosyl hydrolase 18 family. Chitinase class II subfamily.

It carries out the reaction Random endo-hydrolysis of N-acetyl-beta-D-glucosaminide (1-&gt;4)-beta-linkages in chitin and chitodextrins.. This chain is Chitinase B (chiB), found in Serratia marcescens.